Here is a 345-residue protein sequence, read N- to C-terminus: UDP-N-acetylenolpyruvoylglucosamine reductase (345 aa).

The FAD-binding PCMH-type domain maps to 16-186 (LSVSASCIKV…TAVGIFLKKE (171 aa)). The active site involves Arg-162. Residue Ser-232 is the Proton donor of the active site. Residue Glu-328 is part of the active site.

Belongs to the MurB family. FAD serves as cofactor.

It is found in the cytoplasm. It carries out the reaction UDP-N-acetyl-alpha-D-muramate + NADP(+) = UDP-N-acetyl-3-O-(1-carboxyvinyl)-alpha-D-glucosamine + NADPH + H(+). The protein operates within cell wall biogenesis; peptidoglycan biosynthesis. Cell wall formation. The polypeptide is UDP-N-acetylenolpyruvoylglucosamine reductase (Pectobacterium atrosepticum (strain SCRI 1043 / ATCC BAA-672) (Erwinia carotovora subsp. atroseptica)).